Consider the following 163-residue polypeptide: MSQFNQNNKQIDVMGIRKILPHRYPFALLDKIVDWSVEDRTIVAQKNVTINEDFFNGHFPDFPVMPGVLIVEAMAQATAILGELMAETLFAHVVEKAGGGRRTFMLAGIDKVRVKRPVVPGDVLVIESRMVKQKNIICTAESVAKVDGQIVCSAELMAAYKDY.

The active site involves His58.

It belongs to the thioester dehydratase family. FabZ subfamily.

It localises to the cytoplasm. The catalysed reaction is a (3R)-hydroxyacyl-[ACP] = a (2E)-enoyl-[ACP] + H2O. Its function is as follows. Involved in unsaturated fatty acids biosynthesis. Catalyzes the dehydration of short chain beta-hydroxyacyl-ACPs and long chain saturated and unsaturated beta-hydroxyacyl-ACPs. The sequence is that of 3-hydroxyacyl-[acyl-carrier-protein] dehydratase FabZ from Francisella tularensis subsp. tularensis (strain FSC 198).